We begin with the raw amino-acid sequence, 295 residues long: Alpha-1A adrenergic receptor (295 aa).

Residues 1-27 lie on the Extracellular side of the membrane; that stretch reads MVFLSGNASDSSNCTHPPAPVNISKAI. 3 N-linked (GlcNAc...) asparagine glycosylation sites follow: N7, N13, and N22. A helical transmembrane segment spans residues 28 to 51; that stretch reads LLGVILGGLIIFGVLGNILVILSV. At 52 to 64 the chain is on the cytoplasmic side; that stretch reads ACHRHLHSVTHYY. The chain crosses the membrane as a helical span at residues 65-88; the sequence is IVNLAVADLLLTSTVLPFSAIFEI. Residues 89–99 are Extracellular-facing; the sequence is LGYWAFGRVFC. Residues C99 and C176 are joined by a disulfide bond. The helical transmembrane segment at 100–122 threads the bilayer; the sequence is NIWAAVDVLCCTASIMGLCIISI. At 123–143 the chain is on the cytoplasmic side; it reads DRYIGVSYPLRYPTIVTQKRG. Residues 144–167 form a helical membrane-spanning segment; sequence LMALLCVWALSLVISIGPLFGWRQ. The Extracellular segment spans residues 168–181; sequence PAPEDETICQITEE. The helical transmembrane segment at 182 to 205 threads the bilayer; the sequence is PGYVLFSALGSFYVPLTIILVMYC. Over 206–273 the chain is Cytoplasmic; sequence RVYVVAKRES…FSREKKAAKT (68 aa). S215 is modified (phosphoserine; by PKA). Residues 274–295 form a helical membrane-spanning segment; that stretch reads LGIVVGCFVLCWLPFFLVMPIG.

Belongs to the G-protein coupled receptor 1 family. Adrenergic receptor subfamily. ADRA1A sub-subfamily. In terms of assembly, homo- and heterooligomer. Heterooligomerizes with ADRA1B homooligomers in cardiac myocytes. Interacts with CAVIN4.

It localises to the nucleus membrane. It is found in the cell membrane. The protein resides in the cytoplasm. The protein localises to the membrane. Its subcellular location is the caveola. Functionally, this alpha-adrenergic receptor mediates its action by association with G proteins that activate a phosphatidylinositol-calcium second messenger system. Its effect is mediated by G(q) and G(11) proteins. Nuclear ADRA1A-ADRA1B heterooligomers regulate phenylephrine (PE)-stimulated ERK signaling in cardiac myocytes. This chain is Alpha-1A adrenergic receptor (ADRA1A), found in Canis lupus familiaris (Dog).